A 275-amino-acid chain; its full sequence is Probable siderophore transport system ATP-binding protein YusV (275 aa).

The ABC transporter domain maps to I6–N242. ATP is bound at residue G38–S45.

The protein belongs to the ABC transporter superfamily. As to quaternary structure, the iron-hydroxamate siderophore complex is composed of one ATP-binding protein (YusV), two transmembrane proteins (YfiZ and YfhA) and a solute-binding protein (YfiY); the catechoplate siderophore complex is composed of one ATP-binding protein (YusV), two transmembrane proteins (FeuB and FeuC) and a solute-binding protein (FeuA).

The protein resides in the cell membrane. Functionally, provides the ATPase subunit for at least 2 ABC transporter complexes; YfiYZ/YfhA/YusV involved in import of the iron-hydroxamate siderophores schizokinen, arthrobactin and corprogen, and FeuABC/YusV involved in import of the catecholate siderophores bacillibactin and enterobactin. Probably responsible for energy coupling to the transport system. In Bacillus subtilis (strain 168), this protein is Probable siderophore transport system ATP-binding protein YusV (yusV).